A 183-amino-acid polypeptide reads, in one-letter code: Dual-action ribosomal maturation protein DarP (183 aa).

Residues 1–21 (MKQKPEDWLNDVPDNQEDDED) form a disordered region.

Belongs to the DarP family.

Its subcellular location is the cytoplasm. In terms of biological role, member of a network of 50S ribosomal subunit biogenesis factors which assembles along the 30S-50S interface, preventing incorrect 23S rRNA structures from forming. Promotes peptidyl transferase center (PTC) maturation. The chain is Dual-action ribosomal maturation protein DarP from Pectobacterium atrosepticum (strain SCRI 1043 / ATCC BAA-672) (Erwinia carotovora subsp. atroseptica).